The following is a 160-amino-acid chain: S-protein homolog 13 (160 aa).

The signal sequence occupies residues 1–27 (MGRDLGWCFFVATVLLAAVLLPAPTIA).

This sequence belongs to the plant self-incompatibility (S1) protein family.

It is found in the secreted. The sequence is that of S-protein homolog 13 from Arabidopsis thaliana (Mouse-ear cress).